The primary structure comprises 890 residues: DNA mismatch repair protein MutS (890 aa).

634–641 contacts ATP; sequence GPNMGGKS.

The protein belongs to the DNA mismatch repair MutS family.

Its function is as follows. This protein is involved in the repair of mismatches in DNA. It is possible that it carries out the mismatch recognition step. This protein has a weak ATPase activity. The chain is DNA mismatch repair protein MutS from Burkholderia pseudomallei (strain 1710b).